Consider the following 455-residue polypeptide: Serine--tRNA ligase (455 aa).

252–254 (TSE) contributes to the L-serine binding site. Residues 283 to 285 (RKE) and Val299 each bind ATP. Position 306 (Glu306) interacts with L-serine. 370–373 (EVVS) contributes to the ATP binding site. Residue Thr406 coordinates L-serine.

Belongs to the class-II aminoacyl-tRNA synthetase family. Type-1 seryl-tRNA synthetase subfamily. As to quaternary structure, homodimer. The tRNA molecule binds across the dimer.

Its subcellular location is the cytoplasm. It carries out the reaction tRNA(Ser) + L-serine + ATP = L-seryl-tRNA(Ser) + AMP + diphosphate + H(+). The catalysed reaction is tRNA(Sec) + L-serine + ATP = L-seryl-tRNA(Sec) + AMP + diphosphate + H(+). Its pathway is aminoacyl-tRNA biosynthesis; selenocysteinyl-tRNA(Sec) biosynthesis; L-seryl-tRNA(Sec) from L-serine and tRNA(Sec): step 1/1. In terms of biological role, catalyzes the attachment of serine to tRNA(Ser). Is also able to aminoacylate tRNA(Sec) with serine, to form the misacylated tRNA L-seryl-tRNA(Sec), which will be further converted into selenocysteinyl-tRNA(Sec). In Thermococcus sibiricus (strain DSM 12597 / MM 739), this protein is Serine--tRNA ligase.